Reading from the N-terminus, the 91-residue chain is Putative transmembrane protein ORF91a (91 aa).

3 helical membrane passes run 17–37, 40–60, and 69–89; these read TGIS…VGLA, AFLG…LLFM, and GIGF…YIST.

The protein resides in the host membrane. This is Putative transmembrane protein ORF91a from Acidianus convivator (ABV).